The following is a 130-amino-acid chain: Aspartate 1-decarboxylase (130 aa).

The Schiff-base intermediate with substrate; via pyruvic acid role is filled by Ser-25. Ser-25 is subject to Pyruvic acid (Ser). Residue Thr-57 coordinates substrate. The active-site Proton donor is Tyr-58. 73–75 (GAA) provides a ligand contact to substrate.

It belongs to the PanD family. As to quaternary structure, heterooctamer of four alpha and four beta subunits. Pyruvate serves as cofactor. Post-translationally, is synthesized initially as an inactive proenzyme, which is activated by self-cleavage at a specific serine bond to produce a beta-subunit with a hydroxyl group at its C-terminus and an alpha-subunit with a pyruvoyl group at its N-terminus.

Its subcellular location is the cytoplasm. The enzyme catalyses L-aspartate + H(+) = beta-alanine + CO2. Its pathway is cofactor biosynthesis; (R)-pantothenate biosynthesis; beta-alanine from L-aspartate: step 1/1. Its function is as follows. Catalyzes the pyruvoyl-dependent decarboxylation of aspartate to produce beta-alanine. The chain is Aspartate 1-decarboxylase from Myxococcus xanthus (strain DK1622).